Consider the following 434-residue polypeptide: Tol-Pal system protein TolB (434 aa).

The signal sequence occupies residues 1–21 (MIVRRALALAALALAASPALA). Positions 411 to 434 (GDRQTPVTSGKTDLAAPAWGPLAP) are disordered.

This sequence belongs to the TolB family. As to quaternary structure, the Tol-Pal system is composed of five core proteins: the inner membrane proteins TolA, TolQ and TolR, the periplasmic protein TolB and the outer membrane protein Pal. They form a network linking the inner and outer membranes and the peptidoglycan layer.

Its subcellular location is the periplasm. Functionally, part of the Tol-Pal system, which plays a role in outer membrane invagination during cell division and is important for maintaining outer membrane integrity. The sequence is that of Tol-Pal system protein TolB from Anaeromyxobacter dehalogenans (strain 2CP-C).